Here is a 337-residue protein sequence, read N- to C-terminus: Oligopeptide transport ATP-binding protein OppD (337 aa).

The ABC transporter domain occupies 20 to 269 (LNVKDLRVTF…PVHPYSIGLL (250 aa)). 56–63 (GESGSGKS) lines the ATP pocket.

The protein belongs to the ABC transporter superfamily. The complex is composed of two ATP-binding proteins (OppD and OppF), two transmembrane proteins (OppB and OppC) and a solute-binding protein (OppA or MppA).

The protein localises to the cell inner membrane. The enzyme catalyses a [peptide](out) + ATP + H2O = a [peptide](in) + ADP + phosphate + H(+). It carries out the reaction L-alanyl-gamma-D-glutamyl-meso-2,6-diaminopimelate(out) + ATP + H2O = L-alanyl-gamma-D-glutamyl-meso-2,6-diaminopimelate(in) + ADP + phosphate + H(+). In terms of biological role, part of the ABC transporter complex OppABCDF involved in the uptake of oligopeptides and of the ABC transporter complex MppA-OppBCDF involved in the uptake of the cell wall murein tripeptide L-alanyl-gamma-D-glutamyl-meso-diaminopimelate. Probably responsible for energy coupling to the transport system. Plays an important nutritional role and is involved in the recycling of cell wall peptides. In Escherichia coli (strain K12), this protein is Oligopeptide transport ATP-binding protein OppD (oppD).